The primary structure comprises 544 residues: Chaperonin GroEL (544 aa).

ATP is bound by residues threonine 29–proline 32, lysine 50, aspartate 86–threonine 90, glycine 413, aspartate 479–alanine 481, and aspartate 495.

This sequence belongs to the chaperonin (HSP60) family. Forms a cylinder of 14 subunits composed of two heptameric rings stacked back-to-back. Interacts with the co-chaperonin GroES.

The protein resides in the cytoplasm. It catalyses the reaction ATP + H2O + a folded polypeptide = ADP + phosphate + an unfolded polypeptide.. In terms of biological role, together with its co-chaperonin GroES, plays an essential role in assisting protein folding. The GroEL-GroES system forms a nano-cage that allows encapsulation of the non-native substrate proteins and provides a physical environment optimized to promote and accelerate protein folding. The sequence is that of Chaperonin GroEL from Borrelia turicatae (strain 91E135).